Reading from the N-terminus, the 204-residue chain is MPFELPALPYPYDALEPHIDKETMNIHHTKHHNTYVTNLNAALEGHPDLQNKSLEELLSNLEALPESIRTAVRNNGGGHANHSLFWTILSPNGGGEPTGELAEAINKKFGSFTAFKDEFSKAAAGRFGSGWAWLVVNNGELEITSTPNQDSPIMEGKTPILGLDVWEHAYYLKYQNRRPEYIAAFWNIVNWDEVAKRYSEAKAK.

His27 contacts Mn(2+). Phosphothreonine occurs at positions 34 and 70. His82, Asp164, and His168 together coordinate Mn(2+).

It belongs to the iron/manganese superoxide dismutase family. Homodimer. The cofactor is Mn(2+).

It carries out the reaction 2 superoxide + 2 H(+) = H2O2 + O2. In terms of biological role, destroys superoxide anion radicals which are normally produced within the cells and which are toxic to biological systems. The polypeptide is Superoxide dismutase [Mn] (sodA) (Bacillus caldotenax).